Here is a 220-residue protein sequence, read N- to C-terminus: Pro-Pro endopeptidase (220 aa).

A signal peptide spans 1–26; that stretch reads MRPSKKLLIAIISIFLISSVPVSAHA. Residues 35–220 enclose the ATLF-like domain; sequence KDTLSQIVVF…TYSFLQNLAK (186 aa). Interacts with substrate peptide regions lie at residues 101–103 and 117–119; these read KGW and GGS. Zn(2+) is bound at residue His142. Residue Glu143 is the Proton acceptor of the active site. Positions 146, 178, and 185 each coordinate Zn(2+).

This sequence belongs to the peptidase M34 family. Pro-Pro endopeptidase subfamily. As to quaternary structure, monomer. Zn(2+) serves as cofactor.

It is found in the secreted. The catalysed reaction is The enzyme catalyzes the hydrolytic cleavage of peptide bonds between two proline residues.. With respect to regulation, is inhibited by the chelating agent o-phenanthroline in vitro. Zinc-dependent endoprotease with a unique preference for proline residues surrounding the scissile bond. Exhibits a high preference for an asparagine at the P2 position and hydrophobic residues (Val, Ile, Leu) at the P3 position. Efficiently cleaves the LPXTG cell surface proteins CD630_28310 and CD630_32460 at multiple cleavage sites in vivo. Has a role in the regulation of C.difficile adhesion versus motility by cleaving surface adhesion proteins such as the collagen binding protein CD630_28310, and is important for efficient infection. Is also able to cleave fibronectin and fibrinogen in vitro; cleaves at the N-terminus of the beta-chain of fibrinogen. Destabilizes the fibronectin network produced by human fibroblasts. Therefore, may be important in key steps of clostridial pathogenesis by degrading extracellular matrix components associated with the gut epithelial cells. To a lesser extent, IgA1, IgA2, and human HSP 90-beta, but not HSP 90-alpha, are also substrates for the enzyme. Is not active on different collagen types, casein and gelatin. This chain is Pro-Pro endopeptidase, found in Clostridioides difficile (strain 630) (Peptoclostridium difficile).